A 421-amino-acid chain; its full sequence is MTARAVRGTKDLFGKELRMHQRIVATARKVLEAAGALELVTPIFEETQVFEKGVGAATDIVRKEMFTFQDRGGRSLTLRPEGTAAMVRAYLEHGMKVWPQPVRLWMAGPMFRAERPQKGRYRQFHQVNYEALGSENPILDAEAVVLLYECLKELGLRRLKVKLSSVGDPEDRARYNAYLREVLSPHREALSEDSKERLELNPMRILDSKSERDQALLKELGVRPMLDFLGEEARAHLKEVERHLERLSVPYELEPALVRGLDYYVRTAFEVHHEEIGAQSALGGGGRYDGLSELLGGPRVPGVGFAFGVERVALALEAEGFGLPEEKGPDLYLIPLTEEAVAEAFYLAEALRPRLRAEYALAPRKPAKGLEEALKRGAAFAGFLGEDELRAGEVTLKRLATGEQVRLSREEVPGYLLQALG.

It belongs to the class-II aminoacyl-tRNA synthetase family. As to quaternary structure, homodimer.

The protein localises to the cytoplasm. It catalyses the reaction tRNA(His) + L-histidine + ATP = L-histidyl-tRNA(His) + AMP + diphosphate + H(+). The chain is Histidine--tRNA ligase from Thermus thermophilus (strain ATCC BAA-163 / DSM 7039 / HB27).